The primary structure comprises 224 residues: CRIB domain-containing protein RIC1 (224 aa).

The region spanning 29-42 (IGFPTDVKHVAHIG) is the CRIB domain. Residues 38–224 (VAHIGSDGPT…SVDTTCNDII (187 aa)) are disordered. 4 stretches are compositionally biased toward polar residues: residues 69–84 (SRGN…TNQR), 114–132 (PNHN…ASSD), 144–155 (AHGSTDSSNDQE), and 215–224 (SVDTTCNDII).

Interacts with ARAC11/ROP1. In terms of tissue distribution, expressed in columella cells from the root tip and epidermal cells at the base of lateral roots, leaves, stems, flowers, anthers, pollen and siliques.

It localises to the cytoplasm. Its subcellular location is the cytoskeleton. In terms of biological role, functions as a downstream effector of Rho-related GTP binding proteins of the 'Rho of Plants' (ROPs) family. Participates in the propagation of ROP GTPase signals in specific cellular responses. Required for cortical microtubule organization. Promotes microtubule bundling and formation of well-ordered microtubule arrays in the neck region of pavement cells. This restricts cell lateral expansion to generate the narrow neck morphology of pavement cells. Its function is inhibited when it interacts with activated ARAC4/ROP2. Represses ARAC4/ROP2 activation and antagonizes the RIC4-actin pathway that promotes the assembly of cortical actin microfilaments. Acts as a downstream effector of ARAC3/ROP6 which functions in a signaling pathway that negatively regulates clathrin-mediated endocytosis and internalization of PIN1 and PIN2. Required for the asymmetric auxin distribution during root gravitropism and vascular patterning. Positively regulates auxin responses, but negatively regulates ABA responses during lateral root development and primary root elongation. The sequence is that of CRIB domain-containing protein RIC1 (RIC1) from Arabidopsis thaliana (Mouse-ear cress).